We begin with the raw amino-acid sequence, 226 residues long: Urease accessory protein UreF (226 aa).

It belongs to the UreF family. In terms of assembly, ureD, UreF and UreG form a complex that acts as a GTP-hydrolysis-dependent molecular chaperone, activating the urease apoprotein by helping to assemble the nickel containing metallocenter of UreC. The UreE protein probably delivers the nickel.

Its subcellular location is the cytoplasm. Its function is as follows. Required for maturation of urease via the functional incorporation of the urease nickel metallocenter. The polypeptide is Urease accessory protein UreF (Paraburkholderia phymatum (strain DSM 17167 / CIP 108236 / LMG 21445 / STM815) (Burkholderia phymatum)).